The sequence spans 160 residues: Transcription elongation factor GreA (160 aa).

The stretch at 1-72 forms a coiled coil; sequence MAEKTYPMTL…QISSLETKIR (72 aa).

The protein belongs to the GreA/GreB family.

Necessary for efficient RNA polymerase transcription elongation past template-encoded arresting sites. The arresting sites in DNA have the property of trapping a certain fraction of elongating RNA polymerases that pass through, resulting in locked ternary complexes. Cleavage of the nascent transcript by cleavage factors such as GreA or GreB allows the resumption of elongation from the new 3'terminus. GreA releases sequences of 2 to 3 nucleotides. This chain is Transcription elongation factor GreA, found in Streptococcus gordonii (strain Challis / ATCC 35105 / BCRC 15272 / CH1 / DL1 / V288).